A 568-amino-acid chain; its full sequence is Urease subunit alpha (568 aa).

The Urease domain maps to 131–568 (GGMDAHIHFI…LPLAQRYFLY (438 aa)). Residues H136, H138, and K219 each contribute to the Ni(2+) site. Position 219 is an N6-carboxylysine (K219). H221 provides a ligand contact to substrate. Residues H248 and H274 each contribute to the Ni(2+) site. Residue H322 is the Proton donor of the active site. D362 serves as a coordination point for Ni(2+).

Belongs to the metallo-dependent hydrolases superfamily. Urease alpha subunit family. As to quaternary structure, heterotrimer of UreA (gamma), UreB (beta) and UreC (alpha) subunits. Three heterotrimers associate to form the active enzyme. It depends on Ni cation as a cofactor. Post-translationally, carboxylation allows a single lysine to coordinate two nickel ions.

The protein resides in the cytoplasm. It carries out the reaction urea + 2 H2O + H(+) = hydrogencarbonate + 2 NH4(+). It functions in the pathway nitrogen metabolism; urea degradation; CO(2) and NH(3) from urea (urease route): step 1/1. The chain is Urease subunit alpha from Cereibacter sphaeroides (strain ATCC 17023 / DSM 158 / JCM 6121 / CCUG 31486 / LMG 2827 / NBRC 12203 / NCIMB 8253 / ATH 2.4.1.) (Rhodobacter sphaeroides).